The sequence spans 339 residues: 7,8-didemethyl-8-hydroxy-5-deazariboflavin synthase (339 aa).

The Radical SAM core domain maps to 13 to 258 (ITYSKNIFIP…RDTDVSIQVP (246 aa)). Positions 27, 31, and 34 each coordinate [4Fe-4S] cluster.

Belongs to the radical SAM superfamily. CofG family. In terms of assembly, consists of two subunits, CofG and CofH. [4Fe-4S] cluster is required as a cofactor.

The catalysed reaction is 5-amino-5-(4-hydroxybenzyl)-6-(D-ribitylimino)-5,6-dihydrouracil + S-adenosyl-L-methionine = 7,8-didemethyl-8-hydroxy-5-deazariboflavin + 5'-deoxyadenosine + L-methionine + NH4(+) + H(+). Its pathway is cofactor biosynthesis; coenzyme F0 biosynthesis. Its function is as follows. Catalyzes the radical-mediated synthesis of 7,8-didemethyl-8-hydroxy-5-deazariboflavin from 5-amino-5-(4-hydroxybenzyl)-6-(D-ribitylimino)-5,6-dihydrouracil. This is 7,8-didemethyl-8-hydroxy-5-deazariboflavin synthase from Methanobrevibacter smithii (strain ATCC 35061 / DSM 861 / OCM 144 / PS).